The sequence spans 162 residues: Phosphopantetheine adenylyltransferase (162 aa).

Ser11 lines the substrate pocket. ATP is bound by residues 11 to 12 (SF) and His19. Substrate contacts are provided by Lys43, Leu75, and Arg89. ATP-binding positions include 90–92 (GLR), Glu100, and 125–131 (FSYISSS).

Belongs to the bacterial CoaD family. In terms of assembly, homohexamer. The cofactor is Mg(2+).

It localises to the cytoplasm. The enzyme catalyses (R)-4'-phosphopantetheine + ATP + H(+) = 3'-dephospho-CoA + diphosphate. It participates in cofactor biosynthesis; coenzyme A biosynthesis; CoA from (R)-pantothenate: step 4/5. Functionally, reversibly transfers an adenylyl group from ATP to 4'-phosphopantetheine, yielding dephospho-CoA (dPCoA) and pyrophosphate. This chain is Phosphopantetheine adenylyltransferase, found in Petrotoga mobilis (strain DSM 10674 / SJ95).